Here is a 511-residue protein sequence, read N- to C-terminus: Phospho-2-dehydro-3-deoxyheptonate aldolase 1, chloroplastic (511 aa).

The N-terminal 49 residues, 1–49 (MALSNTLSLSSSKSLVQSHLLHNPTPQPRFSLFPTTQHGRRHPISAVHA), are a transit peptide targeting the chloroplast.

It belongs to the class-II DAHP synthase family. As to expression, higher levels seen in the cotyledons than in the leaves and flowers. Lower levels seen in the roots and stems.

The protein localises to the plastid. It localises to the chloroplast. The catalysed reaction is D-erythrose 4-phosphate + phosphoenolpyruvate + H2O = 7-phospho-2-dehydro-3-deoxy-D-arabino-heptonate + phosphate. The protein operates within metabolic intermediate biosynthesis; chorismate biosynthesis; chorismate from D-erythrose 4-phosphate and phosphoenolpyruvate: step 1/7. In terms of biological role, may be involved in the synthesis of secondary metabolites derived from intermediates of the pre-chorismate pathway up to shikimate. In Solanum lycopersicum (Tomato), this protein is Phospho-2-dehydro-3-deoxyheptonate aldolase 1, chloroplastic.